Reading from the N-terminus, the 1663-residue chain is Cortactin-binding protein 2 (1663 aa).

A disordered region spans residues 1–26 (MATDGASCEPDLSRAPEDAAGATAEA). The stretch at 119-275 (RKMQERMSAQ…IEQLKKGGDS (157 aa)) forms a coiled coil. 2 disordered regions span residues 355-440 (SIDR…LHPG) and 454-478 (GNAN…SPTS). Residues 386 to 403 (PSTDSTPDPTSSTPLLSS) show a composition bias toward low complexity. Polar residues predominate over residues 404–422 (NAAPPTAQTPGITPQNSQA). Residue Arg498 is modified to Asymmetric dimethylarginine. The disordered stretch occupies residues 499–614 (FTGPQAGAPP…KSSSPQLPPK (116 aa)). Polar residues predominate over residues 583 to 593 (TVASPPSSLPQ). ANK repeat units lie at residues 709–739 (GRPT…DINY), 743–772 (DGHS…QVNA), 776–805 (NGFT…NINH), 809–838 (GGQT…DRCV), and 842–871 (DGWT…PAHG). Residues 872–897 (NSFSEEESESGVFDLDGEEESPEGKS) form a disordered region. The segment covering 875–892 (SEEESESGVFDLDGEEES) has biased composition (acidic residues). An ANK 6 repeat occupies 912 to 942 (EGWTAAHIAAAKGFKNCLEILCRHGGLEPER). Residues 1446–1482 (SKKKGESGAWRKVNTSPRRKSGRFSLPTWNKPDLSTE) form a disordered region. The residue at position 1524 (Ser1524) is a Phosphoserine. The tract at residues 1617–1663 (RSKVTQCSQNTKSSSSSSNTRQIEINNNSKEENWNLHKNEHLEKANK) is disordered. Polar residues-rich tracts occupy residues 1619–1628 (KVTQCSQNTK) and 1635–1644 (NTRQIEINNN). Basic and acidic residues predominate over residues 1645-1663 (SKEENWNLHKNEHLEKANK).

As to quaternary structure, interacts with CTTN/cortactin SH3 domain. Interacts with STRN, STRN4/zinedin and MOB4/phocein; this interactions mediate the association with the STRIPAK core complex and may regulate dendritic spine distribution of the STRIPAK complex in hippocampal neurons. Activation of glutamate receptors weakens the interaction with STRN and STRN4.

It is found in the cytoplasm. It localises to the cell cortex. The protein resides in the cell projection. Its subcellular location is the dendritic spine. Functionally, regulates the dendritic spine distribution of CTTN/cortactin in hippocampal neurons, and thus controls dendritic spinogenesis and dendritic spine maintenance. Associates with the striatin-interacting phosphatase and kinase (STRIPAK) core complex to regulate dendritic spine distribution of the STRIPAK complex in hippocampal neurons. This is Cortactin-binding protein 2 (CTTNBP2) from Plecturocebus moloch (Dusky titi monkey).